The sequence spans 195 residues: Thymidine kinase (195 aa).

ATP-binding positions include 15–22 (GSMFSGKT) and 91–94 (DEAN). The active-site Proton acceptor is the Glu92. Zn(2+) contacts are provided by Cys148, Cys151, Cys186, and Cys189.

The protein belongs to the thymidine kinase family. Homotetramer.

It is found in the cytoplasm. The catalysed reaction is thymidine + ATP = dTMP + ADP + H(+). This is Thymidine kinase from Halobacterium salinarum (strain ATCC 29341 / DSM 671 / R1).